The primary structure comprises 748 residues: Cysteine--tRNA ligase, cytoplasmic (748 aa).

Residues 1 to 25 (MADSSGQQGKGRRVQPQWSPPAGTQ) are disordered. Ala2 carries the post-translational modification N-acetylalanine. Ser19 is subject to Phosphoserine. Cys55 contacts Zn(2+). An L-cysteine-binding site is contributed by Gly56. A 'HIGH' region motif is present at residues 57–67 (PTVYDASHMGH). At Arg79 the chain carries Phosphoserine. Position 96 (Thr96) interacts with L-cysteine. Residues 101 to 104 (KIIK) carry the 'KIIK' region motif. Ser305 and Ser307 each carry phosphoserine. Cys348, His373, and Glu377 together coordinate Zn(2+). His373 lines the L-cysteine pocket. The 'KMSKS' region motif lies at 406–410 (KMSKS). Lys409 provides a ligand contact to ATP. Lys503 bears the N6-acetyllysine mark. The segment covering 653–679 (EKRRVEEEKRKKKEEAARRKQEQEAAK) has biased composition (basic and acidic residues). Positions 653 to 686 (EKRRVEEEKRKKKEEAARRKQEQEAAKLAKMKIP) are disordered. Ser746 carries the phosphoserine modification.

It belongs to the class-I aminoacyl-tRNA synthetase family. Homodimer. Zn(2+) serves as cofactor.

Its subcellular location is the cytoplasm. The catalysed reaction is tRNA(Cys) + L-cysteine + ATP = L-cysteinyl-tRNA(Cys) + AMP + diphosphate. Functionally, catalyzes the ATP-dependent ligation of cysteine to tRNA(Cys). This chain is Cysteine--tRNA ligase, cytoplasmic, found in Homo sapiens (Human).